Consider the following 870-residue polypeptide: Valine--tRNA ligase (870 aa).

A compositionally biased stretch (polar residues) spans 1 to 13 (MTSQTFTTSSATP). Residues 1-21 (MTSQTFTTSSATPPTRGVVPD) form a disordered region. The short motif at 63 to 73 (PTVSGHLHPGH) is the 'HIGH' region element. The segment at 479 to 505 (YDHPLLPDESALPVDPASQPPSGYQES) is disordered. The short motif at 595 to 599 (KMSKS) is the 'KMSKS' region element. An ATP-binding site is contributed by Lys598.

The protein belongs to the class-I aminoacyl-tRNA synthetase family. ValS type 2 subfamily. As to quaternary structure, monomer.

The protein localises to the cytoplasm. The catalysed reaction is tRNA(Val) + L-valine + ATP = L-valyl-tRNA(Val) + AMP + diphosphate. Functionally, catalyzes the attachment of valine to tRNA(Val). As ValRS can inadvertently accommodate and process structurally similar amino acids such as threonine, to avoid such errors, it has a 'posttransfer' editing activity that hydrolyzes mischarged Thr-tRNA(Val) in a tRNA-dependent manner. The chain is Valine--tRNA ligase from Cutibacterium acnes (strain DSM 16379 / KPA171202) (Propionibacterium acnes).